The sequence spans 642 residues: Threonine--tRNA ligase (642 aa).

The region spanning 1–61 (MPVITLPDGS…SEDANLVIFT (61 aa)) is the TGS domain. The tract at residues 243-534 (DHRKLAKKFD…LIEHYEGSFP (292 aa)) is catalytic. Positions 334, 385, and 511 each coordinate Zn(2+).

It belongs to the class-II aminoacyl-tRNA synthetase family. As to quaternary structure, homodimer. Requires Zn(2+) as cofactor.

It localises to the cytoplasm. It carries out the reaction tRNA(Thr) + L-threonine + ATP = L-threonyl-tRNA(Thr) + AMP + diphosphate + H(+). Functionally, catalyzes the attachment of threonine to tRNA(Thr) in a two-step reaction: L-threonine is first activated by ATP to form Thr-AMP and then transferred to the acceptor end of tRNA(Thr). Also edits incorrectly charged L-seryl-tRNA(Thr). This chain is Threonine--tRNA ligase, found in Cellvibrio japonicus (strain Ueda107) (Pseudomonas fluorescens subsp. cellulosa).